We begin with the raw amino-acid sequence, 593 residues long: Copine-5 (593 aa).

The 133-residue stretch at 2–134 (EQPEDMASLS…SSGSRLEKPL (133 aa)) folds into the C2 1 domain. Serine 19 bears the Phosphoserine mark. The Ca(2+) site is built by aspartate 38, aspartate 44, aspartate 98, aspartate 100, serine 103, lysine 108, and aspartate 110. Serine 103 carries the post-translational modification Phosphoserine. Position 140 is a phosphoserine (serine 140). The 124-residue stretch at 161–284 (KCGTIILSAE…ARGQSQFNIY (124 aa)) folds into the C2 2 domain. Ca(2+) contacts are provided by aspartate 192, aspartate 198, aspartate 254, aspartate 256, and aspartate 262. The VWFA domain occupies 328 to 554 (NFTVAIDFTA…DVLAEIPDQL (227 aa)). The segment at 562–593 (GIRPRPPPAAPAQSPPQSPAHSPPGSPVHTHI) is disordered. The segment covering 565–587 (PRPPPAAPAQSPPQSPAHSPPGS) has biased composition (pro residues).

Belongs to the copine family. Ca(2+) is required as a cofactor. Expressed in the cerebra and cerebellum of newborn brain. Expressed in the eye, lung and muscles but weakly expressed in the adult brain (at protein level).

It is found in the perikaryon. It localises to the cell projection. Its function is as follows. Probable calcium-dependent phospholipid-binding protein that may play a role in calcium-mediated intracellular processes. Plays a role in dendrite formation by melanocytes. This Mus musculus (Mouse) protein is Copine-5.